An 87-amino-acid polypeptide reads, in one-letter code: Toxin Cll5b (87 aa).

The N-terminal stretch at methionine 1 to alanine 19 is a signal peptide. An LCN-type CS-alpha/beta domain is found at lysine 20–serine 85. 4 disulfides stabilise this stretch: cysteine 31–cysteine 84, cysteine 35–cysteine 60, cysteine 44–cysteine 65, and cysteine 48–cysteine 67. The propeptide at lysine 86–lysine 87 is removed by a carboxypeptidase.

It belongs to the long (4 C-C) scorpion toxin superfamily. Sodium channel inhibitor family. Beta subfamily. As to expression, expressed by the venom gland.

The protein localises to the secreted. Functionally, beta toxins bind voltage-independently at site-4 of sodium channels (Nav) and shift the voltage of activation toward more negative potentials thereby affecting sodium channel activation and promoting spontaneous and repetitive firing. The sequence is that of Toxin Cll5b from Centruroides limpidus (Mexican scorpion).